A 154-amino-acid chain; its full sequence is Large ribosomal subunit protein uL30 (154 aa).

This sequence belongs to the universal ribosomal protein uL30 family. In terms of assembly, part of the 50S ribosomal subunit.

The polypeptide is Large ribosomal subunit protein uL30 (Methanoregula boonei (strain DSM 21154 / JCM 14090 / 6A8)).